A 123-amino-acid chain; its full sequence is uncharacterized protein (123 aa).

A disordered region spans residues 34–123; sequence PEKISQTVKK…MNRDGGVKKE (90 aa). Composition is skewed to basic and acidic residues over residues 50–60, 74–100, and 107–123; these read KKIDENKDKSP, TAKD…EFSQ, and EETR…VKKE.

It localises to the mitochondrion. This is an uncharacterized protein from Schizosaccharomyces pombe (strain 972 / ATCC 24843) (Fission yeast).